The chain runs to 455 residues: Transmembrane protease serine 5 (455 aa).

At 1-49 the chain is on the cytoplasmic side; the sequence is MSPTLDDQSPMEIRCTEEGAGPGIFRMELGDQRQSISQSQRWCCLQRGC. The chain crosses the membrane as a helical; Signal-anchor for type II membrane protein span at residues 50–70; the sequence is VILGVLGLLAGAGIASWLLVL. At 71–455 the chain is on the extracellular side; that stretch reads YLWPAASPSI…DWIHDTVQVR (385 aa). In terms of domain architecture, SRCR spans 112–207; it reads FRINGEDLLL…SGRIVSLKCS (96 aa). Intrachain disulfides connect Cys135–Cys196, Cys148–Cys206, Cys209–Cys328, Cys243–Cys259, Cys342–Cys411, Cys374–Cys390, and Cys401–Cys429. Asn163 and Asn170 each carry an N-linked (GlcNAc...) asparagine glycan. One can recognise a Peptidase S1 domain in the interval 218 to 453; it reads IVGGQAVASG…FLDWIHDTVQ (236 aa). Active-site charge relay system residues include His258 and Asp308. 2 N-linked (GlcNAc...) asparagine glycosylation sites follow: Asn319 and Asn375. The active-site Charge relay system is Ser405.

This sequence belongs to the peptidase S1 family.

It is found in the cell membrane. Its function is as follows. May play a role in hearing. This Mus musculus (Mouse) protein is Transmembrane protease serine 5 (Tmprss5).